We begin with the raw amino-acid sequence, 634 residues long: 1,4-alpha-glucan branching enzyme GlgB (634 aa).

Asp-305 (nucleophile) is an active-site residue. Glu-357 acts as the Proton donor in catalysis.

This sequence belongs to the glycosyl hydrolase 13 family. GlgB subfamily. As to quaternary structure, monomer.

It carries out the reaction Transfers a segment of a (1-&gt;4)-alpha-D-glucan chain to a primary hydroxy group in a similar glucan chain.. It functions in the pathway glycan biosynthesis; glycogen biosynthesis. In terms of biological role, catalyzes the formation of the alpha-1,6-glucosidic linkages in glycogen by scission of a 1,4-alpha-linked oligosaccharide from growing alpha-1,4-glucan chains and the subsequent attachment of the oligosaccharide to the alpha-1,6 position. In Lactiplantibacillus plantarum (strain ATCC BAA-793 / NCIMB 8826 / WCFS1) (Lactobacillus plantarum), this protein is 1,4-alpha-glucan branching enzyme GlgB.